Reading from the N-terminus, the 426-residue chain is Citrate transporter (426 aa).

A run of 12 helical transmembrane segments spans residues 1-21 (MLAI…MSNR), 22-42 (LSAL…SGFG), 59-79 (TGIM…SGLF), 86-106 (ILSF…VLTM), 137-157 (LVLA…PWGG), 176-196 (PLIP…YILG), 232-252 (LLTV…PVLF), 278-298 (AGNA…TGIL), 318-338 (AMGP…TFFM), 343-363 (FYFG…IDAA), 377-397 (LLSP…VSFG), and 406-426 (WAVG…IISF).

It belongs to the CitM (TC 2.A.11) transporter family.

The protein localises to the cell membrane. In terms of biological role, transports the free citrate anion. Probably cotransports citrate and at least three or four protons. The citrate uptake is inhibited by the presence of magnesium ions. This chain is Citrate transporter (citN), found in Bacillus subtilis (strain 168).